The primary structure comprises 457 residues: uncharacterized protein (457 aa).

Helical transmembrane passes span 15-35 (YGAI…GAIA), 54-74 (IWVV…FSFL), 87-107 (GLVV…LQML), 112-132 (VIQG…IRLI), 144-164 (INSF…AAIL), 166-186 (IASW…ALLL), 205-225 (LPSA…LSGF), 229-249 (QSLT…IFFI), 269-289 (LFSL…LAMV), 308-328 (LLLT…GYLI), 334-354 (GLLG…LVLL), 357-377 (SPAD…FGLF), 400-420 (MLGT…ALML), and 428-448 (THVS…VSGL).

Belongs to the major facilitator superfamily. TCR/Tet family.

Its subcellular location is the cell inner membrane. This is an uncharacterized protein from Escherichia coli (strain K12).